A 389-amino-acid chain; its full sequence is S-adenosylmethionine synthase (389 aa).

Histidine 17 contributes to the ATP binding site. Residue aspartate 19 participates in Mg(2+) binding. Residue glutamate 45 participates in K(+) binding. The L-methionine site is built by glutamate 58 and glutamine 101. Residues 101–111 (QSPDISQGVTE) form a flexible loop region. Residues 168–170 (DSK), 234–235 (RF), aspartate 243, 249–250 (RK), alanine 266, and lysine 270 contribute to the ATP site. Aspartate 243 serves as a coordination point for L-methionine. Lysine 274 contributes to the L-methionine binding site.

The protein belongs to the AdoMet synthase family. In terms of assembly, homotetramer; dimer of dimers. Mg(2+) is required as a cofactor. The cofactor is K(+).

It is found in the cytoplasm. It catalyses the reaction L-methionine + ATP + H2O = S-adenosyl-L-methionine + phosphate + diphosphate. The protein operates within amino-acid biosynthesis; S-adenosyl-L-methionine biosynthesis; S-adenosyl-L-methionine from L-methionine: step 1/1. In terms of biological role, catalyzes the formation of S-adenosylmethionine (AdoMet) from methionine and ATP. The overall synthetic reaction is composed of two sequential steps, AdoMet formation and the subsequent tripolyphosphate hydrolysis which occurs prior to release of AdoMet from the enzyme. In Geobacter metallireducens (strain ATCC 53774 / DSM 7210 / GS-15), this protein is S-adenosylmethionine synthase.